The following is a 494-amino-acid chain: Glycosyl hydrolase family 109 protein (494 aa).

2 disordered regions span residues 1-35 (MNDAAPQNPGQDEAKGTGEKDNGGSMSPRSALRTT) and 59-86 (EAAQTAVPAAESDESAAPKRQGRTMAGV). Positions 1–55 (MNDAAPQNPGQDEAKGTGEKDNGGSMSPRSALRTTAGVAGAGLGLSALGTGTASA) form a signal peptide, tat-type signal. Residues 12-22 (DEAKGTGEKDN) show a composition bias toward basic and acidic residues. Residues 103 to 104 (NR), aspartate 125, 174 to 177 (WDFH), 194 to 195 (EC), and asparagine 223 contribute to the NAD(+) site. Residues tyrosine 252, arginine 271, 283-286 (YPNH), and tyrosine 365 each bind substrate. Residue tyrosine 283 coordinates NAD(+). Positions 463–494 (KANGKPQQIPDFTRGEWKKSRPGTDSEKPSEP) are disordered. Residues 475-494 (TRGEWKKSRPGTDSEKPSEP) are compositionally biased toward basic and acidic residues.

The protein belongs to the Gfo/Idh/MocA family. Glycosyl hydrolase 109 subfamily. It depends on NAD(+) as a cofactor. Post-translationally, predicted to be exported by the Tat system. The position of the signal peptide cleavage has not been experimentally proven.

Its function is as follows. Glycosidase. The sequence is that of Glycosyl hydrolase family 109 protein from Streptomyces niveus (Streptomyces spheroides).